Consider the following 455-residue polypeptide: N-lysine methyltransferase setd6 (455 aa).

Positions 38-266 (PKVYISTEGT…AGQELFNTYG (229 aa)) constitute an SET domain.

This sequence belongs to the class V-like SAM-binding methyltransferase superfamily. Histone-lysine methyltransferase family. SETD6 subfamily.

It is found in the nucleus. In terms of biological role, protein-lysine N-methyltransferase. This chain is N-lysine methyltransferase setd6 (setd6), found in Xenopus laevis (African clawed frog).